Consider the following 22-residue polypeptide: 5-methyltetrahydropteroyltriglutamate--homocysteine methyltransferase (22 aa).

Belongs to the vitamin-B12 independent methionine synthase family. It depends on Zn(2+) as a cofactor.

The protein resides in the cytoplasm. It catalyses the reaction 5-methyltetrahydropteroyltri-L-glutamate + L-homocysteine = tetrahydropteroyltri-L-glutamate + L-methionine. Its pathway is amino-acid biosynthesis; L-methionine biosynthesis via de novo pathway; L-methionine from L-homocysteine (MetE route): step 1/1. In terms of biological role, catalyzes the transfer of a methyl group from 5-methyltetrahydrofolate to homocysteine resulting in methionine formation. The chain is 5-methyltetrahydropteroyltriglutamate--homocysteine methyltransferase from Pseudotsuga menziesii (Douglas-fir).